The primary structure comprises 255 residues: Geranylgeranylglyceryl phosphate synthase (255 aa).

The Mg(2+) site is built by D26 and S55. Residues 174 to 180 (YLEAGSG), 205 to 206 (GG), and 227 to 228 (GT) contribute to the sn-glycerol 1-phosphate site.

It belongs to the GGGP/HepGP synthase family. Group II subfamily. It depends on Mg(2+) as a cofactor.

Its subcellular location is the cytoplasm. The enzyme catalyses sn-glycerol 1-phosphate + (2E,6E,10E)-geranylgeranyl diphosphate = sn-3-O-(geranylgeranyl)glycerol 1-phosphate + diphosphate. It functions in the pathway membrane lipid metabolism; glycerophospholipid metabolism. Functionally, prenyltransferase that catalyzes the transfer of the geranylgeranyl moiety of geranylgeranyl diphosphate (GGPP) to the C3 hydroxyl of sn-glycerol-1-phosphate (G1P). This reaction is the first ether-bond-formation step in the biosynthesis of archaeal membrane lipids. The polypeptide is Geranylgeranylglyceryl phosphate synthase (Thermococcus sibiricus (strain DSM 12597 / MM 739)).